The following is a 340-amino-acid chain: MKQEVHRIQEETLAELQQVSTLEALQELKVKVLGKKGSLTAQLRKMGGLSPEERPIFGQVVNETRDILEAAWVRREEELSQAAMLKQLEEEKLDISLPGVSLPRGHQHPLTKVIEEIEEIFLGMGFQIAEGPEIESDYYNFEALNLPKDHPAREMQDSFYITEEILLRTQTSPVQIRTMEKQRPQLPVKIICPGKVYRNDDDATHSPMFHQVEGLMVDRGIRMSDLKGILLSFSRMMFGESREIRLRPSFFPFTEPSAEVDVSCMLCGGAGCRICKGTGWIEILGSGMVHPRVLEMGGYDSKELTGFAFGMGVERIAMLKYGIEDMRLLFDNDLRFLQQF.

Glu-255 provides a ligand contact to Mg(2+).

This sequence belongs to the class-II aminoacyl-tRNA synthetase family. Phe-tRNA synthetase alpha subunit type 1 subfamily. Tetramer of two alpha and two beta subunits. The cofactor is Mg(2+).

It is found in the cytoplasm. The enzyme catalyses tRNA(Phe) + L-phenylalanine + ATP = L-phenylalanyl-tRNA(Phe) + AMP + diphosphate + H(+). The protein is Phenylalanine--tRNA ligase alpha subunit of Desulfitobacterium hafniense (strain DSM 10664 / DCB-2).